The following is a 191-amino-acid chain: MAMQLSLSHQSWAKSLASPITSFDPARSPPKRVELGPNCLNGGATAGKLMREKVGERMRMSGRSCCVKASLETAVGAESETLVGKVTEVDKDTFWPIANGAGDKPVVLDMYTQWCGPCKVMAPKYQELAEKLLDVVFLKLDCNQENKPLAKELGIRVVPTFKILKGGKIVDEVTGAKFDKLVAAIEAARSS.

Residues 68–190 enclose the Thioredoxin domain; the sequence is KASLETAVGA…LVAAIEAARS (123 aa). Active-site nucleophile residues include Cys-115 and Cys-118. Cys-115 and Cys-118 are disulfide-bonded.

This sequence belongs to the thioredoxin family. Plant F-type subfamily. As to quaternary structure, forms a complex with heterodimeric ferredoxin-thioredoxin reductase (FTR) and ferredoxin.

It localises to the plastid. The protein resides in the chloroplast. In terms of biological role, participates in various redox reactions through the reversible oxidation of the active center dithiol to a disulfide. The F form is known to activate a number of enzymes of the photosynthetic carbon cycle. The chain is Thioredoxin F-type, chloroplastic from Mesembryanthemum crystallinum (Common ice plant).